We begin with the raw amino-acid sequence, 92 residues long: Long neurotoxin 469 (92 aa).

The first 21 residues, 1 to 21, serve as a signal peptide directing secretion; that stretch reads MKTLLLTLVVVTIVCLDLGDS. Intrachain disulfides connect Cys24–Cys41, Cys34–Cys62, Cys47–Cys51, Cys66–Cys77, and Cys78–Cys83.

Belongs to the three-finger toxin family. Long-chain subfamily. Type II alpha-neurotoxin sub-subfamily. Expressed by the venom gland.

The protein localises to the secreted. Functionally, binds with high affinity to muscular (alpha-1/CHRNA1) and neuronal (alpha-7/CHRNA7) nicotinic acetylcholine receptor (nAChR) and inhibits acetylcholine from binding to the receptor, thereby impairing neuromuscular and neuronal transmission. In Drysdalia coronoides (White-lipped snake), this protein is Long neurotoxin 469.